A 326-amino-acid chain; its full sequence is MPPSISAFQAAYIGIEVLIALVSVPGNVLVIWAVKVNQALRDATFCFIVSLAVADVAVGALVIPLAILINIGPRTYFHTCLKVACPVLILTQSSILALLAIAVDRYLRVKIPLRYKTVVTPRRAVVAITGCWILSFVVGLTPMFGWNNLSAVERDWLANGSVGEPVIECQFEKVISMEYMVYFNFFVWVLPPLLLMVLIYMEVFYLIRKQLNKKVSASSGDPQKYYGKELKIAKSLALILFLFALSWLPLHILNCITLFCPSCHMPRILIYIAIFLSHGNSAMNPIVYAFRIQKFRVTFLKIWNDHFRCQPAPPVDEDAPAERPDD.

Residues 1 to 10 are Extracellular-facing; the sequence is MPPSISAFQA. The chain crosses the membrane as a helical span at residues 11 to 33; the sequence is AYIGIEVLIALVSVPGNVLVIWA. At 34–46 the chain is on the cytoplasmic side; that stretch reads VKVNQALRDATFC. Residues 47–69 traverse the membrane as a helical segment; it reads FIVSLAVADVAVGALVIPLAILI. Over 70–80 the chain is Extracellular; it reads NIGPRTYFHTC. C80 and C169 are joined by a disulfide. Residues 81–102 traverse the membrane as a helical segment; sequence LKVACPVLILTQSSILALLAIA. Residues 103 to 123 are Cytoplasmic-facing; the sequence is VDRYLRVKIPLRYKTVVTPRR. A helical membrane pass occupies residues 124–146; the sequence is AVVAITGCWILSFVVGLTPMFGW. Residues 147 to 176 lie on the Extracellular side of the membrane; the sequence is NNLSAVERDWLANGSVGEPVIECQFEKVIS. N-linked (GlcNAc...) asparagine glycosylation is found at N148 and N159. Residues 177–201 form a helical membrane-spanning segment; sequence MEYMVYFNFFVWVLPPLLLMVLIYM. Over 202–235 the chain is Cytoplasmic; the sequence is EVFYLIRKQLNKKVSASSGDPQKYYGKELKIAKS. Residues 236–259 traverse the membrane as a helical segment; the sequence is LALILFLFALSWLPLHILNCITLF. Over 260–267 the chain is Extracellular; sequence CPSCHMPR. A helical transmembrane segment spans residues 268-292; the sequence is ILIYIAIFLSHGNSAMNPIVYAFRI. The Cytoplasmic segment spans residues 293–326; sequence QKFRVTFLKIWNDHFRCQPAPPVDEDAPAERPDD. C309 is lipidated: S-palmitoyl cysteine.

Belongs to the G-protein coupled receptor 1 family.

The protein localises to the cell membrane. Functionally, receptor for adenosine. The activity of this receptor is mediated by G proteins which inhibit adenylyl cyclase. This Bos taurus (Bovine) protein is Adenosine receptor A1 (ADORA1).